The sequence spans 205 residues: MIGKLKGVVDTLEEDHVILDVHGVGYLVHCSGRTLSALPRAGEAAALFIETHVREDQIRLFGFSSAAERDWFRLLQGIQGIGTKTALAVLSTLSASELTQAIALGDKTTVARAPGVGPRVATRIITELKDKMPGFSASEPLAAQLGGGGVASAQGGAAADAVSALVNLGYGVPQANAAIAAALRGAGEGAKTEVLIRLGLKELAK.

The interval 1-64 (MIGKLKGVVD…EDQIRLFGFS (64 aa)) is domain I. The interval 65-143 (SAAERDWFRL…GFSASEPLAA (79 aa)) is domain II. The segment at 144–152 (QLGGGGVAS) is flexible linker. The domain III stretch occupies residues 153–205 (AQGGAAADAVSALVNLGYGVPQANAAIAAALRGAGEGAKTEVLIRLGLKELAK).

The protein belongs to the RuvA family. As to quaternary structure, homotetramer. Forms an RuvA(8)-RuvB(12)-Holliday junction (HJ) complex. HJ DNA is sandwiched between 2 RuvA tetramers; dsDNA enters through RuvA and exits via RuvB. An RuvB hexamer assembles on each DNA strand where it exits the tetramer. Each RuvB hexamer is contacted by two RuvA subunits (via domain III) on 2 adjacent RuvB subunits; this complex drives branch migration. In the full resolvosome a probable DNA-RuvA(4)-RuvB(12)-RuvC(2) complex forms which resolves the HJ.

The protein resides in the cytoplasm. Functionally, the RuvA-RuvB-RuvC complex processes Holliday junction (HJ) DNA during genetic recombination and DNA repair, while the RuvA-RuvB complex plays an important role in the rescue of blocked DNA replication forks via replication fork reversal (RFR). RuvA specifically binds to HJ cruciform DNA, conferring on it an open structure. The RuvB hexamer acts as an ATP-dependent pump, pulling dsDNA into and through the RuvAB complex. HJ branch migration allows RuvC to scan DNA until it finds its consensus sequence, where it cleaves and resolves the cruciform DNA. This Xanthobacter autotrophicus (strain ATCC BAA-1158 / Py2) protein is Holliday junction branch migration complex subunit RuvA.